Here is a 251-residue protein sequence, read N- to C-terminus: MRILIILSIILCSLSIRADLEYVDNEIYNYNGGSNENGCVEVYDPYEKFNRKVFVFNSVLDYIILRPLAVGYKNITNDYVKARVNSFVSNVDTPLTAINYGLQLNYDKTMKSVWRFLINTTLGIGGLFDVAGKVGLPSDRQTFGSTLAHYGVAPGPYLVLPIIGSTNARDMTDSVITNYALNPLMYYTHNDFDLGVLAVSKINDRYVVLPFSDYVMKNSTDPYVAIRSALHRVREASVQYPENFKCPKPKN.

Residues 1 to 18 (MRILIILSIILCSLSIRA) form the signal peptide.

Belongs to the MlaA family.

This is an uncharacterized protein from Rickettsia conorii (strain ATCC VR-613 / Malish 7).